The sequence spans 251 residues: Putative F-box protein PP2-B12 (251 aa).

The 46-residue stretch at methionine 1–phenylalanine 46 folds into the F-box domain.

The protein is Putative F-box protein PP2-B12 (PP2B12) of Arabidopsis thaliana (Mouse-ear cress).